The primary structure comprises 109 residues: UPF0060 membrane protein ABO_1373 (109 aa).

Helical transmembrane passes span 1-21 (MLALYTLGLFILTAVTEIVGC), 33-53 (PGWVLLPAAASLAMFAWLLSL), 63-83 (AAYGGVYVFVALLWLWGVEGV), and 87-107 (PWDFVGVAVALAGMGIIMFAP).

Belongs to the UPF0060 family.

The protein resides in the cell inner membrane. The chain is UPF0060 membrane protein ABO_1373 from Alcanivorax borkumensis (strain ATCC 700651 / DSM 11573 / NCIMB 13689 / SK2).